We begin with the raw amino-acid sequence, 695 residues long: Threonine--tRNA ligase 1, cytoplasmic (695 aa).

The segment at 1-21 (MSEEKASSPSGKMDGEKPLNP) is disordered. The 65-residue stretch at 51 to 115 (DSKPIKVTLP…ETDCTLELLK (65 aa)) folds into the TGS domain. Lys215 carries the post-translational modification N6-acetyllysine. A Phosphothreonine modification is found at Thr218. Residue Tyr270 is modified to Phosphotyrosine. Position 425 is a phosphothreonine (Thr425).

The protein belongs to the class-II aminoacyl-tRNA synthetase family. In terms of assembly, homodimer. Post-translationally, ISGylated.

Its subcellular location is the cytoplasm. It catalyses the reaction tRNA(Thr) + L-threonine + ATP = L-threonyl-tRNA(Thr) + AMP + diphosphate + H(+). Its function is as follows. Catalyzes the attachment of threonine to tRNA(Thr) in a two-step reaction: threonine is first activated by ATP to form Thr-AMP and then transferred to the acceptor end of tRNA(Thr). Also edits incorrectly charged tRNA(Thr) via its editing domain, at the post-transfer stage. This Rattus norvegicus (Rat) protein is Threonine--tRNA ligase 1, cytoplasmic (Tars1).